We begin with the raw amino-acid sequence, 692 residues long: Glycogen phosphorylase (692 aa).

Lys-586 carries the N6-(pyridoxal phosphate)lysine modification.

The protein belongs to the glycogen phosphorylase family. Requires pyridoxal 5'-phosphate as cofactor.

It catalyses the reaction [(1-&gt;4)-alpha-D-glucosyl](n) + phosphate = [(1-&gt;4)-alpha-D-glucosyl](n-1) + alpha-D-glucose 1-phosphate. In terms of biological role, phosphorylase is an important allosteric enzyme in carbohydrate metabolism. Enzymes from different sources differ in their regulatory mechanisms and in their natural substrates. However, all known phosphorylases share catalytic and structural properties. This chain is Glycogen phosphorylase (glgP), found in Aquifex aeolicus (strain VF5).